We begin with the raw amino-acid sequence, 171 residues long: O-acetyl-ADP-ribose deacetylase 1 (171 aa).

Positions 1–171 constitute a Macro domain; that stretch reads MKKITVIQGD…NYDLYLKLLN (171 aa). Residues 10 to 11, Asn24, 32 to 34, and 121 to 125 each bind substrate; these read DI, GVD, and STGIY. Asp34 serves as the catalytic Proton acceptor.

The protein belongs to the MacroD-type family. YmdB subfamily. Homodimer. Interacts with RNase III.

The catalysed reaction is 3''-O-acetyl-ADP-D-ribose + H2O = ADP-D-ribose + acetate + H(+). It catalyses the reaction 2''-O-acetyl-ADP-D-ribose + H2O = ADP-D-ribose + acetate + H(+). Deacetylates O-acetyl-ADP ribose to yield ADP-ribose and free acetate. Down-regulates ribonuclease 3 (RNase III) activity. Acts by interacting directly with the region of the ribonuclease that is required for dimerization/activation. In Pantoea vagans (strain C9-1) (Pantoea agglomerans (strain C9-1)), this protein is O-acetyl-ADP-ribose deacetylase 1.